The primary structure comprises 196 residues: dTTP/UTP pyrophosphatase (196 aa).

Catalysis depends on Asp-78, which acts as the Proton acceptor.

It belongs to the Maf family. YhdE subfamily. A divalent metal cation serves as cofactor.

It localises to the cytoplasm. The enzyme catalyses dTTP + H2O = dTMP + diphosphate + H(+). The catalysed reaction is UTP + H2O = UMP + diphosphate + H(+). Nucleoside triphosphate pyrophosphatase that hydrolyzes dTTP and UTP. May have a dual role in cell division arrest and in preventing the incorporation of modified nucleotides into cellular nucleic acids. This chain is dTTP/UTP pyrophosphatase, found in Photobacterium profundum (strain SS9).